Reading from the N-terminus, the 226-residue chain is UPF0758 protein SUB0843 (226 aa).

The 123-residue stretch at 103-225 (QILSSYQVAK…YYSFREKSDI (123 aa)) folds into the MPN domain. Zn(2+) contacts are provided by His-174, His-176, and Asp-187. A JAMM motif motif is present at residues 174-187 (HNHPSGLTNPSEND).

This sequence belongs to the UPF0758 family.

This is UPF0758 protein SUB0843 from Streptococcus uberis (strain ATCC BAA-854 / 0140J).